Consider the following 230-residue polypeptide: Probable methylthioribulose-1-phosphate dehydratase (230 aa).

Cys87 is a binding site for substrate. Zn(2+) is bound by residues His105 and His107. Glu129 serves as the catalytic Proton donor/acceptor. His185 is a binding site for Zn(2+).

Belongs to the aldolase class II family. MtnB subfamily. It depends on Zn(2+) as a cofactor.

The protein resides in the cytoplasm. It carries out the reaction 5-(methylsulfanyl)-D-ribulose 1-phosphate = 5-methylsulfanyl-2,3-dioxopentyl phosphate + H2O. The protein operates within amino-acid biosynthesis; L-methionine biosynthesis via salvage pathway; L-methionine from S-methyl-5-thio-alpha-D-ribose 1-phosphate: step 2/6. Catalyzes the dehydration of methylthioribulose-1-phosphate (MTRu-1-P) into 2,3-diketo-5-methylthiopentyl-1-phosphate (DK-MTP-1-P). The protein is Probable methylthioribulose-1-phosphate dehydratase of Drosophila grimshawi (Hawaiian fruit fly).